The chain runs to 443 residues: Deoxyguanosinetriphosphate triphosphohydrolase-like protein (443 aa).

One can recognise an HD domain in the interval 61-246 (RLTHSLEVAC…MEAADDICYG (186 aa)).

Belongs to the dGTPase family. Type 3 subfamily.

The sequence is that of Deoxyguanosinetriphosphate triphosphohydrolase-like protein from Pseudomonas aeruginosa (strain LESB58).